A 458-amino-acid polypeptide reads, in one-letter code: Divalent metal cation transporter MntH (458 aa).

Helical transmembrane passes span 38–58, 76–96, 119–139, 151–171, 180–200, 223–243, 275–295, 315–335, 370–390, 393–413, and 437–457; these read GFWK…VGYM, SLLS…AMAA, GGFL…AEII, MPLI…LLLM, AVVA…VILA, MLYL…LFLG, LTMA…LFFG, IVGA…LLAS, LMSV…EAKI, LLTF…IPLV, and FISG…LGFV.

This sequence belongs to the NRAMP family.

Its subcellular location is the cell membrane. Its function is as follows. H(+)-stimulated, divalent metal cation uptake system. This is Divalent metal cation transporter MntH from Lacticaseibacillus casei (strain BL23) (Lactobacillus casei).